Consider the following 93-residue polypeptide: Large ribosomal subunit protein uL23cz/uL23cy (93 aa).

This sequence belongs to the universal ribosomal protein uL23 family. Part of the 50S ribosomal subunit.

Its subcellular location is the plastid. It is found in the chloroplast. Binds to 23S rRNA. The polypeptide is Large ribosomal subunit protein uL23cz/uL23cy (rpl23-A) (Eucalyptus globulus subsp. globulus (Tasmanian blue gum)).